Reading from the N-terminus, the 250-residue chain is Probable transcriptional regulatory protein MAP_1030 (250 aa).

It belongs to the TACO1 family.

It is found in the cytoplasm. In Mycolicibacterium paratuberculosis (strain ATCC BAA-968 / K-10) (Mycobacterium paratuberculosis), this protein is Probable transcriptional regulatory protein MAP_1030.